A 431-amino-acid chain; its full sequence is CCA tRNA nucleotidyltransferase 1, mitochondrial (431 aa).

The transit peptide at 1–31 (MWAKLFLRPSFVNRVHLTWSCRALLTMQLKT) directs the protein to the mitochondrion. Positions 61 and 64 each coordinate ATP. CTP-binding residues include Gly61 and Arg64. 2 residues coordinate Mg(2+): Asp74 and Asp76. ATP-binding residues include Arg148, Asp191, Arg194, Arg197, and Arg200. Residues Arg148, Asp191, Arg194, Arg197, and Arg200 each contribute to the CTP site.

Belongs to the tRNA nucleotidyltransferase/poly(A) polymerase family. Monomer, and homodimer. Mg(2+) serves as cofactor. In terms of tissue distribution, expressed ubiquitously during early embryogenesis.

It localises to the mitochondrion. Its subcellular location is the cytoplasm. It is found in the nucleus. The enzyme catalyses a tRNA precursor + 2 CTP + ATP = a tRNA with a 3' CCA end + 3 diphosphate. It catalyses the reaction a tRNA with a 3' CCA end + 2 CTP + ATP = a tRNA with a 3' CCACCA end + 3 diphosphate. In terms of biological role, nucleotidyltransferase that catalyzes the addition and repair of the essential 3'-terminal CCA sequence in tRNAs, which is necessary for the attachment of amino acids to the 3' terminus of tRNA molecules, using CTP and ATP as substrates. tRNA 3'-terminal CCA addition is required both for tRNA processing and repair. Promotes tRNA repair and recycling downstream of the ribosome-associated quality control (RQC) pathway by mediating addition of the tRNA 3'-terminal CCA following cleavage by ankzf1 and repair by elac1. Also involved in tRNA surveillance by mediating tandem CCA addition to generate a CCACCA at the 3' terminus of unstable tRNAs and tRNA-like transcripts. While stable tRNAs receive only 3'-terminal CCA, unstable tRNAs beginning with GG are marked with CCACCA and rapidly degraded. The structural flexibility of RNA controls the choice between CCA versus CCACCA addition: following the first CCA addition cycle, nucleotide-binding to the active site triggers a clockwise screw motion, producing torque on the RNA. This ejects stable RNAs, whereas unstable RNAs are refolded while bound to the enzyme and subjected to a second CCA catalytic cycle. This chain is CCA tRNA nucleotidyltransferase 1, mitochondrial, found in Danio rerio (Zebrafish).